The chain runs to 111 residues: Heavy metal-associated isoprenylated plant protein 10 (111 aa).

In terms of domain architecture, HMA spans 1 to 68; it reads MQETVVFEWG…ICDYVDITAV (68 aa). A disordered region spans residues 68–111; the sequence is VGPEGQPAQNRNPVKKPEPKVIRGRPYPPQKKTPGKNSDECIIL. Cys108 is subject to Cysteine methyl ester. Residue Cys108 is the site of S-farnesyl cysteine attachment. Positions 109 to 111 are cleaved as a propeptide — removed in mature form; the sequence is IIL.

It belongs to the HIPP family.

In terms of biological role, probable heavy-metal-binding protein. The sequence is that of Heavy metal-associated isoprenylated plant protein 10 from Arabidopsis thaliana (Mouse-ear cress).